Reading from the N-terminus, the 318-residue chain is Aspartate carbamoyltransferase catalytic subunit (318 aa).

Residues Arg-59 and Thr-60 each contribute to the carbamoyl phosphate site. Lys-87 contacts L-aspartate. Positions 109, 137, and 140 each coordinate carbamoyl phosphate. L-aspartate-binding residues include Arg-170 and Arg-224. Residues Gly-265 and Pro-266 each coordinate carbamoyl phosphate.

Belongs to the aspartate/ornithine carbamoyltransferase superfamily. ATCase family. In terms of assembly, heterododecamer (2C3:3R2) of six catalytic PyrB chains organized as two trimers (C3), and six regulatory PyrI chains organized as three dimers (R2).

The enzyme catalyses carbamoyl phosphate + L-aspartate = N-carbamoyl-L-aspartate + phosphate + H(+). Its pathway is pyrimidine metabolism; UMP biosynthesis via de novo pathway; (S)-dihydroorotate from bicarbonate: step 2/3. In terms of biological role, catalyzes the condensation of carbamoyl phosphate and aspartate to form carbamoyl aspartate and inorganic phosphate, the committed step in the de novo pyrimidine nucleotide biosynthesis pathway. This Rhizobium etli (strain CIAT 652) protein is Aspartate carbamoyltransferase catalytic subunit.